Reading from the N-terminus, the 30-residue chain is LIM and SH3 domain protein 1 (30 aa).

An N-acetylmethionine modification is found at Met-1. An LIM zinc-binding domain is found at 5 to 30; the sequence is CARCGKIVYPTEKVNCLDKFWHKACF.

As to quaternary structure, interacts with F-actin. Interacts with ANKRD54. Interacts with KBTBD10. In terms of processing, phosphorylated.

It localises to the cytoplasm. Its subcellular location is the cell cortex. The protein localises to the cytoskeleton. Plays an important role in the regulation of dynamic actin-based, cytoskeletal activities. Agonist-dependent changes in LASP1 phosphorylation may also serve to regulate actin-associated ion transport activities, not only in the parietal cell but also in certain other F-actin-rich secretory epithelial cell types. This Sus scrofa (Pig) protein is LIM and SH3 domain protein 1 (LASP1).